A 272-amino-acid polypeptide reads, in one-letter code: Dermonecrotic toxin StSicTox-betaIF1 (272 aa).

Residue H5 is part of the active site. E25 and D27 together coordinate Mg(2+). H41 (nucleophile) is an active-site residue. 2 disulfide bridges follow: C45–C51 and C47–C189. D85 is a Mg(2+) binding site.

This sequence belongs to the arthropod phospholipase D family. Class II subfamily. Mg(2+) serves as cofactor. Expressed by the venom gland.

Its subcellular location is the secreted. It catalyses the reaction an N-(acyl)-sphingosylphosphocholine = an N-(acyl)-sphingosyl-1,3-cyclic phosphate + choline. The enzyme catalyses an N-(acyl)-sphingosylphosphoethanolamine = an N-(acyl)-sphingosyl-1,3-cyclic phosphate + ethanolamine. It carries out the reaction a 1-acyl-sn-glycero-3-phosphocholine = a 1-acyl-sn-glycero-2,3-cyclic phosphate + choline. The catalysed reaction is a 1-acyl-sn-glycero-3-phosphoethanolamine = a 1-acyl-sn-glycero-2,3-cyclic phosphate + ethanolamine. Its function is as follows. Dermonecrotic toxins cleave the phosphodiester linkage between the phosphate and headgroup of certain phospholipids (sphingolipid and lysolipid substrates), forming an alcohol (often choline) and a cyclic phosphate. This toxin acts on sphingomyelin (SM). It may also act on ceramide phosphoethanolamine (CPE), lysophosphatidylcholine (LPC) and lysophosphatidylethanolamine (LPE), but not on lysophosphatidylserine (LPS), and lysophosphatidylglycerol (LPG). It acts by transphosphatidylation, releasing exclusively cyclic phosphate products as second products. Induces dermonecrosis, hemolysis, increased vascular permeability, edema, inflammatory response, and platelet aggregation. This chain is Dermonecrotic toxin StSicTox-betaIF1, found in Sicarius terrosus (Cave spider).